The sequence spans 145 residues: Transcriptional regulator MraZ (145 aa).

SpoVT-AbrB domains lie at 5 to 50 and 81 to 124; these read TFNH…ALPQ and AHEV…DRAA.

The protein belongs to the MraZ family. As to quaternary structure, forms oligomers.

It localises to the cytoplasm. The protein resides in the nucleoid. This Anaeromyxobacter dehalogenans (strain 2CP-1 / ATCC BAA-258) protein is Transcriptional regulator MraZ.